Here is a 152-residue protein sequence, read N- to C-terminus: Nucleoside diphosphate kinase A (152 aa).

Positions 12, 60, 88, and 94 each coordinate ATP. Lys100 participates in a covalent cross-link: Glycyl lysine isopeptide (Lys-Gly) (interchain with G-Cter in ubiquitin). ATP is bound by residues Arg105 and Asn115. His118 serves as the catalytic Pros-phosphohistidine intermediate. Phosphoserine occurs at positions 120 and 122. Lys124 carries the N6-acetyllysine modification. The residue at position 125 (Ser125) is a Phosphoserine.

It belongs to the NDK family. Hexamer of two different chains: An and B (A6, A5B, A4B2, A3B3, A2B4, AB5, B6). Interacts with PRUNE1. Component of the SET complex, composed of at least ANP32A, APEX1, HMGB2, NME1, SET and TREX1. Within this complex, interacts directly with SET. Also interacts with TREX1, but only following translocation to the nucleus. It depends on Mg(2+) as a cofactor.

The protein resides in the cytoplasm. The protein localises to the nucleus. The catalysed reaction is a 2'-deoxyribonucleoside 5'-diphosphate + ATP = a 2'-deoxyribonucleoside 5'-triphosphate + ADP. It carries out the reaction a ribonucleoside 5'-diphosphate + ATP = a ribonucleoside 5'-triphosphate + ADP. Its activity is regulated as follows. Autophosphorylation at His-118 increases serine/threonine protein kinase activity of the enzyme. Interaction with the SET complex inhibits exonuclease activity. Major role in the synthesis of nucleoside triphosphates other than ATP. The ATP gamma phosphate is transferred to the NDP beta phosphate via a ping-pong mechanism, using a phosphorylated active-site intermediate. Possesses nucleoside-diphosphate kinase, serine/threonine-specific protein kinase, geranyl and farnesyl pyrophosphate kinase, histidine protein kinase and 3'-5' exonuclease activities. Involved in cell proliferation, differentiation and development, signal transduction, G protein-coupled receptor endocytosis, and gene expression. Required for neural development including neural patterning and cell fate determination. During GZMA-mediated cell death, works in concert with TREX1. NME1 nicks one strand of DNA and TREX1 removes bases from the free 3' end to enhance DNA damage and prevent DNA end reannealing and rapid repair. The sequence is that of Nucleoside diphosphate kinase A (Nme1) from Mus musculus (Mouse).